A 794-amino-acid chain; its full sequence is DNA ligase (794 aa).

The segment at 1-47 (MEEDLFSLAAGKQPSQQATNETAPRAGEARENAGTDHPGNAEDPAHR) is disordered. Residues 13 to 22 (QPSQQATNET) are compositionally biased toward polar residues. Over residues 27–47 (GEARENAGTDHPGNAEDPAHR) the composition is skewed to basic and acidic residues. NAD(+) is bound by residues 73 to 77 (DAEYD), 122 to 123 (SI), and E160. Residue K162 is the N6-AMP-lysine intermediate of the active site. NAD(+)-binding residues include R183, E219, K335, and K359. Zn(2+) is bound by residues C457, C460, C475, and C480. The 78-residue stretch at 717–794 (IPAGSLSGKT…EEDFYKMIGN (78 aa)) folds into the BRCT domain.

The protein belongs to the NAD-dependent DNA ligase family. LigA subfamily. The cofactor is Mg(2+). Mn(2+) serves as cofactor.

The enzyme catalyses NAD(+) + (deoxyribonucleotide)n-3'-hydroxyl + 5'-phospho-(deoxyribonucleotide)m = (deoxyribonucleotide)n+m + AMP + beta-nicotinamide D-nucleotide.. Its function is as follows. DNA ligase that catalyzes the formation of phosphodiester linkages between 5'-phosphoryl and 3'-hydroxyl groups in double-stranded DNA using NAD as a coenzyme and as the energy source for the reaction. It is essential for DNA replication and repair of damaged DNA. The polypeptide is DNA ligase (Akkermansia muciniphila (strain ATCC BAA-835 / DSM 22959 / JCM 33894 / BCRC 81048 / CCUG 64013 / CIP 107961 / Muc)).